The primary structure comprises 321 residues: 4-hydroxy-3-methylbut-2-enyl diphosphate reductase (321 aa).

C12 provides a ligand contact to [4Fe-4S] cluster. Positions 41 and 74 each coordinate (2E)-4-hydroxy-3-methylbut-2-enyl diphosphate. 2 residues coordinate dimethylallyl diphosphate: H41 and H74. Residues H41 and H74 each coordinate isopentenyl diphosphate. C96 lines the [4Fe-4S] cluster pocket. Residue H124 participates in (2E)-4-hydroxy-3-methylbut-2-enyl diphosphate binding. Residue H124 participates in dimethylallyl diphosphate binding. H124 lines the isopentenyl diphosphate pocket. The active-site Proton donor is E126. T167 lines the (2E)-4-hydroxy-3-methylbut-2-enyl diphosphate pocket. C197 contributes to the [4Fe-4S] cluster binding site. The (2E)-4-hydroxy-3-methylbut-2-enyl diphosphate site is built by S225, S226, N227, and S269. S225, S226, N227, and S269 together coordinate dimethylallyl diphosphate. Residues S225, S226, N227, and S269 each contribute to the isopentenyl diphosphate site.

It belongs to the IspH family. As to quaternary structure, homodimer. Requires [4Fe-4S] cluster as cofactor.

It catalyses the reaction isopentenyl diphosphate + 2 oxidized [2Fe-2S]-[ferredoxin] + H2O = (2E)-4-hydroxy-3-methylbut-2-enyl diphosphate + 2 reduced [2Fe-2S]-[ferredoxin] + 2 H(+). The enzyme catalyses dimethylallyl diphosphate + 2 oxidized [2Fe-2S]-[ferredoxin] + H2O = (2E)-4-hydroxy-3-methylbut-2-enyl diphosphate + 2 reduced [2Fe-2S]-[ferredoxin] + 2 H(+). It functions in the pathway isoprenoid biosynthesis; dimethylallyl diphosphate biosynthesis; dimethylallyl diphosphate from (2E)-4-hydroxy-3-methylbutenyl diphosphate: step 1/1. The protein operates within isoprenoid biosynthesis; isopentenyl diphosphate biosynthesis via DXP pathway; isopentenyl diphosphate from 1-deoxy-D-xylulose 5-phosphate: step 6/6. Catalyzes the conversion of 1-hydroxy-2-methyl-2-(E)-butenyl 4-diphosphate (HMBPP) into a mixture of isopentenyl diphosphate (IPP) and dimethylallyl diphosphate (DMAPP). Acts in the terminal step of the DOXP/MEP pathway for isoprenoid precursor biosynthesis. The protein is 4-hydroxy-3-methylbut-2-enyl diphosphate reductase of Escherichia coli O6:K15:H31 (strain 536 / UPEC).